The following is a 494-amino-acid chain: UPF0371 protein SPG_0310 (494 aa).

Belongs to the UPF0371 family.

The sequence is that of UPF0371 protein SPG_0310 from Streptococcus pneumoniae serotype 19F (strain G54).